The following is a 156-amino-acid chain: ATP synthase subunit b (156 aa).

The chain crosses the membrane as a helical span at residues 7-29 (LFGQTVAFILFVWFCMKFVWPPL).

The protein belongs to the ATPase B chain family. F-type ATPases have 2 components, F(1) - the catalytic core - and F(0) - the membrane proton channel. F(1) has five subunits: alpha(3), beta(3), gamma(1), delta(1), epsilon(1). F(0) has three main subunits: a(1), b(2) and c(10-14). The alpha and beta chains form an alternating ring which encloses part of the gamma chain. F(1) is attached to F(0) by a central stalk formed by the gamma and epsilon chains, while a peripheral stalk is formed by the delta and b chains.

It is found in the cell inner membrane. Its function is as follows. F(1)F(0) ATP synthase produces ATP from ADP in the presence of a proton or sodium gradient. F-type ATPases consist of two structural domains, F(1) containing the extramembraneous catalytic core and F(0) containing the membrane proton channel, linked together by a central stalk and a peripheral stalk. During catalysis, ATP synthesis in the catalytic domain of F(1) is coupled via a rotary mechanism of the central stalk subunits to proton translocation. Component of the F(0) channel, it forms part of the peripheral stalk, linking F(1) to F(0). This chain is ATP synthase subunit b, found in Shewanella frigidimarina (strain NCIMB 400).